We begin with the raw amino-acid sequence, 415 residues long: Serine hydroxymethyltransferase (415 aa).

(6S)-5,6,7,8-tetrahydrofolate contacts are provided by residues L119 and 123 to 125 (GHL). K228 carries the N6-(pyridoxal phosphate)lysine modification. 353–355 (SPF) contacts (6S)-5,6,7,8-tetrahydrofolate.

It belongs to the SHMT family. As to quaternary structure, homodimer. It depends on pyridoxal 5'-phosphate as a cofactor.

Its subcellular location is the cytoplasm. It carries out the reaction (6R)-5,10-methylene-5,6,7,8-tetrahydrofolate + glycine + H2O = (6S)-5,6,7,8-tetrahydrofolate + L-serine. It participates in one-carbon metabolism; tetrahydrofolate interconversion. It functions in the pathway amino-acid biosynthesis; glycine biosynthesis; glycine from L-serine: step 1/1. Functionally, catalyzes the reversible interconversion of serine and glycine with tetrahydrofolate (THF) serving as the one-carbon carrier. Also exhibits THF-independent aldolase activity toward beta-hydroxyamino acids, producing glycine and aldehydes, via a retro-aldol mechanism. This chain is Serine hydroxymethyltransferase, found in Halorubrum lacusprofundi (strain ATCC 49239 / DSM 5036 / JCM 8891 / ACAM 34).